A 538-amino-acid chain; its full sequence is Telomerase Cajal body protein 1 (538 aa).

The segment at 1-53 (MKTSEERLVVPDSLSSDQAPAPVPQGSPVDENTDSEPVPQPCGGDDRSQVAAD) is disordered. Phosphoserine is present on residues Ser-27 and Ser-87. A disordered region spans residues 92 to 128 (EQELSENVSLPVEDTNQPELASGEDVEGVSEEPGPVD). A compositionally biased stretch (acidic residues) spans 113 to 128 (SGEDVEGVSEEPGPVD). 6 WD repeats span residues 154-194 (AHSE…YSAT), 210-255 (EGDT…LRAS), 260-301 (NHLD…RDCE), 311-352 (GQSG…ALLG), 353-393 (GHQG…HLLW), and 399-438 (VTTNQRIYFDLDPSGQFLVSGNTNGMVSVWDISGAFGDSS). Disordered regions lie at residues 471-491 (QRMFPEPTNSGDEGEPEGDLP) and 509-538 (CGGGPDPSSPNDPQDEKGQGRAEGCGDGLI). Phosphothreonine is present on Thr-478. Ser-480 carries the phosphoserine modification. The span at 529 to 538 (RAEGCGDGLI) shows a compositional bias: gly residues.

The protein belongs to the TCAB1 family. In terms of assembly, component of the telomerase holoenzyme complex composed of one molecule of TERT, one molecule of WRAP53/TCAB1, two molecules of H/ACA ribonucleoprotein complex subunits DKC1, NOP10, NHP2 and GAR1, and a telomerase RNA template component (TERC). The telomerase holoenzyme complex is associated with TEP1, SMG6/EST1A and POT1. Interacts with the chaperonin-containing T-complex (TRiC) complex; which mediates the folding of WRAP53/TCAB1. Interacts with COIL. Interacts with SMN1. Interacts with RNF8. Interacts with histone H2AX. Preferentially expressed in testis.

It localises to the nucleus. Its subcellular location is the cajal body. The protein localises to the chromosome. It is found in the telomere. Its function is as follows. RNA chaperone that plays a key role in telomere maintenance and RNA localization to Cajal bodies. Specifically recognizes and binds the Cajal body box (CAB box) present in both small Cajal body RNAs (scaRNAs) and telomerase RNA template component (TERC). Essential component of the telomerase holoenzyme complex, a ribonucleoprotein complex essential for the replication of chromosome termini that elongates telomeres in most eukaryotes. In the telomerase holoenzyme complex, required to stimulate the catalytic activity of the complex. Acts by specifically binding the CAB box of the TERC RNA and controlling the folding of the CR4/CR5 region of the TERC RNA, a critical step for telomerase activity. In addition, also controls telomerase holoenzyme complex localization to Cajal body. During S phase, required for delivery of TERC to telomeres during S phase and for telomerase activity. In addition to its role in telomere maintenance, also required for Cajal body formation, probably by mediating localization of scaRNAs to Cajal bodies. Also plays a role in DNA repair: relocalizes to sites of DNA double-strand breaks in response to DNA damage and promotes the repair of DNA double-strand breaks. Acts by recruiting the ubiquitin ligase RNF8 to DNA breaks and promote both homologous recombination (HR) and non-homologous end joining (NHEJ). In Mesocricetus auratus (Golden hamster), this protein is Telomerase Cajal body protein 1.